The sequence spans 186 residues: Coiled-coil domain-containing protein ORF13 (186 aa).

Coiled-coil stretches lie at residues 2-30 and 63-85; these read GIKE…DFIK and LREK…QRDK.

This chain is Coiled-coil domain-containing protein ORF13, found in Helicobacter pylori (strain 35A).